Here is an 87-residue protein sequence, read N- to C-terminus: MANHKSALKRIKQTEKRTERNRHVRSTLRTFIKRVREAAAAKDAALAKEALAAAIPVIDTAASKGVIHSSNASRNISRLTKLVNTLG.

The span at 1–11 (MANHKSALKRI) shows a compositional bias: basic residues. Positions 1–23 (MANHKSALKRIKQTEKRTERNRH) are disordered.

Belongs to the bacterial ribosomal protein bS20 family.

Its function is as follows. Binds directly to 16S ribosomal RNA. The sequence is that of Small ribosomal subunit protein bS20 from Geotalea uraniireducens (strain Rf4) (Geobacter uraniireducens).